A 445-amino-acid chain; its full sequence is Exodeoxyribonuclease 7 large subunit (445 aa).

This sequence belongs to the XseA family. Heterooligomer composed of large and small subunits.

The protein localises to the cytoplasm. It carries out the reaction Exonucleolytic cleavage in either 5'- to 3'- or 3'- to 5'-direction to yield nucleoside 5'-phosphates.. Bidirectionally degrades single-stranded DNA into large acid-insoluble oligonucleotides, which are then degraded further into small acid-soluble oligonucleotides. This chain is Exodeoxyribonuclease 7 large subunit, found in Staphylococcus epidermidis (strain ATCC 35984 / DSM 28319 / BCRC 17069 / CCUG 31568 / BM 3577 / RP62A).